A 106-amino-acid chain; its full sequence is Guanyl-specific ribonuclease Th1 (106 aa).

Disulfide bonds link Cys5–Cys103 and Cys23–Cys84. Residue His39 is part of the active site. The Proton acceptor role is filled by Glu58. Residue His92 is the Proton donor of the active site.

This sequence belongs to the ribonuclease N1/T1 family.

The catalysed reaction is [RNA] containing guanosine + H2O = an [RNA fragment]-3'-guanosine-3'-phosphate + a 5'-hydroxy-ribonucleotide-3'-[RNA fragment].. The chain is Guanyl-specific ribonuclease Th1 from Trichoderma harzianum (Hypocrea lixii).